A 153-amino-acid chain; its full sequence is Regulatory protein RecX (153 aa).

The protein belongs to the RecX family.

The protein resides in the cytoplasm. Its function is as follows. Modulates RecA activity. This chain is Regulatory protein RecX, found in Syntrophotalea carbinolica (strain DSM 2380 / NBRC 103641 / GraBd1) (Pelobacter carbinolicus).